We begin with the raw amino-acid sequence, 469 residues long: Probable Xaa-Pro aminopeptidase PEPP (469 aa).

Mn(2+)-binding residues include Asp257, Asp268, Glu391, and Glu436.

The protein belongs to the peptidase M24B family. Mn(2+) is required as a cofactor.

The catalysed reaction is Release of any N-terminal amino acid, including proline, that is linked to proline, even from a dipeptide or tripeptide.. Its function is as follows. Catalyzes the removal of a penultimate prolyl residue from the N-termini of peptides. This Fusarium vanettenii (strain ATCC MYA-4622 / CBS 123669 / FGSC 9596 / NRRL 45880 / 77-13-4) (Fusarium solani subsp. pisi) protein is Probable Xaa-Pro aminopeptidase PEPP (PEPP).